The following is a 92-amino-acid chain: Kappa-scoloptoxin(15)-Ssd2a (92 aa).

The first 20 residues, Met1–Gly20, serve as a signal peptide directing secretion.

Post-translationally, contains 3 disulfide bonds. In terms of tissue distribution, expressed by the venom gland.

Its subcellular location is the secreted. Its function is as follows. Inhibits voltage-gated potassium channels (Kv) (IC(50)=about 10 nM), when tested on DRG neurons. This Scolopendra dehaani (Thai centipede) protein is Kappa-scoloptoxin(15)-Ssd2a.